A 251-amino-acid chain; its full sequence is tRNA (guanine-N(7)-)-methyltransferase (251 aa).

The S-adenosyl-L-methionine site is built by glutamate 80, glutamate 105, aspartate 132, and aspartate 155. Aspartate 155 is an active-site residue. Substrate-binding positions include lysine 159, aspartate 191, and 228–231 (TKFE).

Belongs to the class I-like SAM-binding methyltransferase superfamily. TrmB family.

The enzyme catalyses guanosine(46) in tRNA + S-adenosyl-L-methionine = N(7)-methylguanosine(46) in tRNA + S-adenosyl-L-homocysteine. The protein operates within tRNA modification; N(7)-methylguanine-tRNA biosynthesis. Its function is as follows. Catalyzes the formation of N(7)-methylguanine at position 46 (m7G46) in tRNA. In Histophilus somni (strain 129Pt) (Haemophilus somnus), this protein is tRNA (guanine-N(7)-)-methyltransferase.